Consider the following 416-residue polypeptide: MRSWLLLLVGLSSYFALSTSVNRAKNSGSDFDLESRASTTNVNSILSKRKLRAPGGDTNTLKDSGKARREKKVWKLFCRVFLQLDDEKKCMFETNQVSSHQPEPRPALSFMPGPKPAHSLVPESKPVRSLMTGNAPVRSIATKLKLVLPRITETVKNPSKSQVVMLWLHKVAEFSRSEHGVNTMSYRTLYEWLSPSFSDAKLAKFFVGLREDEALRETAEKMLAYMLIKSTSTEAVGRAWLKSGEHPSRLFESMNFKEADFKDTVFLGWLKYASLYEKHYFSQSELTDYRRQLFFYRMYDYIKPMYSYEKTQGFLEYKFEGLTSIPGMQDFGQNLADIARRERKISFYLDSEFTPEALFNYLKVSDENLLTNVFQWLRYCRRYTMAYKYVPFDELEFLEEKLGEISLWIYQVYGKL.

Positions 1-20 (MRSWLLLLVGLSSYFALSTS) are cleaved as a signal peptide. The RxLR-dEER motif lies at 49–88 (RKLRAPGGDTNTLKDSGKARREKKVWKLFCRVFLQLDDEK).

Belongs to the RxLR effector family.

The protein localises to the secreted. It is found in the host cytoplasm. The protein resides in the host nucleus. Effector that partially suppresses the tobacco programmed cell death induced by cell death-inducing proteins. This chain is Secreted RxLR effector protein 25, found in Plasmopara viticola (Downy mildew of grapevine).